The sequence spans 369 residues: MNTRPEQASKDTSGLTLQVALQRQDFRLEIDLELAGHGITALFGPSGSGKTTALRVLAGLEPAAQGRVCVQGDMWQDSAQGVFKPVHQRALGYVFQEASLFDHLNVQENLQYGFKRTPASERFRNWDHTLDLLGIAHLLKRWPHELSGGERQRVAIARALAASPRLLLLDEPMAALDAPRKAEILPYLERLQSRLEIPVIYVTHAIDEVARLADQLVLLEAGQVTAHGPTAELLTRLDLPLAHGDSAGAVLHCSVVSHDEADHLTLTRFAGIDLVVPRQNAAVGQTLRVRVAARDASLTLQRQTDTSILNILPASVLALSADGPGQVMVALEVGGSALLARITARSAHTLGLVPGLAVYAQIKGVAILG.

In terms of domain architecture, ABC transporter spans 3–246 (TRPEQASKDT…LDLPLAHGDS (244 aa)). 44 to 51 (GPSGSGKT) contacts ATP. A Mop domain is found at 305–369 (DTSILNILPA…AQIKGVAILG (65 aa)).

The protein belongs to the ABC transporter superfamily. Molybdate importer (TC 3.A.1.8) family. The complex is composed of two ATP-binding proteins (ModC), two transmembrane proteins (ModB) and a solute-binding protein (ModA).

It is found in the cell inner membrane. The enzyme catalyses molybdate(out) + ATP + H2O = molybdate(in) + ADP + phosphate + H(+). In terms of biological role, part of the ABC transporter complex ModABC involved in molybdenum import. Responsible for energy coupling to the transport system. In Albidiferax ferrireducens (strain ATCC BAA-621 / DSM 15236 / T118) (Rhodoferax ferrireducens), this protein is Molybdenum import ATP-binding protein ModC.